Here is a 174-residue protein sequence, read N- to C-terminus: Cytidylate kinase (174 aa).

Residue 7–15 (GLPGTGTTT) coordinates ATP.

It belongs to the cytidylate kinase family. Type 2 subfamily.

Its subcellular location is the cytoplasm. It carries out the reaction CMP + ATP = CDP + ADP. The enzyme catalyses dCMP + ATP = dCDP + ADP. In Methanococcus vannielii (strain ATCC 35089 / DSM 1224 / JCM 13029 / OCM 148 / SB), this protein is Cytidylate kinase.